A 227-amino-acid polypeptide reads, in one-letter code: (S)-2-haloacid dehalogenase (227 aa).

Catalysis depends on Asp-10, which acts as the Nucleophile. An (S)-2-haloacid-binding positions include 11–12 (LY), Arg-41, and 118–119 (SN). Residues 175 to 180 (SSNAWD) form an important for catalytic activity region.

This sequence belongs to the HAD-like hydrolase superfamily. S-2-haloalkanoic acid dehalogenase family. Homotetramer.

The catalysed reaction is an (S)-2-haloacid + H2O = a (2R)-2-hydroxycarboxylate + a halide anion + H(+). It catalyses the reaction (S)-2-chloropropanoate + H2O = (R)-lactate + chloride + H(+). Its function is as follows. Catalyzes the hydrolytic dehalogenation of small (S)-2-haloalkanoic acids to yield the corresponding (R)-2-hydroxyalkanoic acids. Acts on acids of short chain lengths, C(2) to C(4), with inversion of configuration at C-2. Active with 2-halogenated carboxylic acids and converts only the S-isomer (or L-isomer) of 2-chloropropionic acid with inversion of configuration to produce R-lactate (or D-isomer). The polypeptide is (S)-2-haloacid dehalogenase (Pseudomonas putida (Arthrobacter siderocapsulatus)).